Reading from the N-terminus, the 332-residue chain is 2,3-diketo-L-gulonate reductase (332 aa).

Histidine 44 serves as the catalytic Proton donor. NAD(+) is bound by residues 168–174, 224–225, and 304–306; these read ITMVDMS, WK, and GHE.

The protein belongs to the LDH2/MDH2 oxidoreductase family. DlgD subfamily. Homodimer.

It localises to the cytoplasm. The enzyme catalyses 3-dehydro-L-gulonate + NAD(+) = 2,3-dioxo-L-gulonate + NADH + H(+). It catalyses the reaction 3-dehydro-L-gulonate + NADP(+) = 2,3-dioxo-L-gulonate + NADPH + H(+). Catalyzes the reduction of 2,3-diketo-L-gulonate in the presence of NADH, to form 3-keto-L-gulonate. This chain is 2,3-diketo-L-gulonate reductase, found in Escherichia coli O1:K1 / APEC.